A 482-amino-acid polypeptide reads, in one-letter code: Aspartyl/glutamyl-tRNA(Asn/Gln) amidotransferase subunit B (482 aa).

The protein belongs to the GatB/GatE family. GatB subfamily. In terms of assembly, heterotrimer of A, B and C subunits.

It carries out the reaction L-glutamyl-tRNA(Gln) + L-glutamine + ATP + H2O = L-glutaminyl-tRNA(Gln) + L-glutamate + ADP + phosphate + H(+). The enzyme catalyses L-aspartyl-tRNA(Asn) + L-glutamine + ATP + H2O = L-asparaginyl-tRNA(Asn) + L-glutamate + ADP + phosphate + 2 H(+). Allows the formation of correctly charged Asn-tRNA(Asn) or Gln-tRNA(Gln) through the transamidation of misacylated Asp-tRNA(Asn) or Glu-tRNA(Gln) in organisms which lack either or both of asparaginyl-tRNA or glutaminyl-tRNA synthetases. The reaction takes place in the presence of glutamine and ATP through an activated phospho-Asp-tRNA(Asn) or phospho-Glu-tRNA(Gln). The protein is Aspartyl/glutamyl-tRNA(Asn/Gln) amidotransferase subunit B of Thermotoga neapolitana (strain ATCC 49049 / DSM 4359 / NBRC 107923 / NS-E).